We begin with the raw amino-acid sequence, 1110 residues long: Isoleucine--tRNA ligase (1110 aa).

Residues 47 to 57 (PSANGTPGIHH) carry the 'HIGH' region motif. A 'KMSKS' region motif is present at residues 658 to 662 (KMSKR). Residue K661 coordinates ATP.

The protein belongs to the class-I aminoacyl-tRNA synthetase family. IleS type 2 subfamily. Monomer. Requires Zn(2+) as cofactor.

It localises to the cytoplasm. It catalyses the reaction tRNA(Ile) + L-isoleucine + ATP = L-isoleucyl-tRNA(Ile) + AMP + diphosphate. Catalyzes the attachment of isoleucine to tRNA(Ile). As IleRS can inadvertently accommodate and process structurally similar amino acids such as valine, to avoid such errors it has two additional distinct tRNA(Ile)-dependent editing activities. One activity is designated as 'pretransfer' editing and involves the hydrolysis of activated Val-AMP. The other activity is designated 'posttransfer' editing and involves deacylation of mischarged Val-tRNA(Ile). The sequence is that of Isoleucine--tRNA ligase from Cytophaga hutchinsonii (strain ATCC 33406 / DSM 1761 / CIP 103989 / NBRC 15051 / NCIMB 9469 / D465).